The sequence spans 428 residues: 3-phosphoshikimate 1-carboxyvinyltransferase (428 aa).

The 3-phosphoshikimate site is built by K23, S24, and R28. K23 contributes to the phosphoenolpyruvate binding site. Positions 97 and 125 each coordinate phosphoenolpyruvate. The 3-phosphoshikimate site is built by S170, S171, Q172, S198, D314, N337, and K341. Q172 contributes to the phosphoenolpyruvate binding site. D314 (proton acceptor) is an active-site residue. Residues R345, R387, and K412 each contribute to the phosphoenolpyruvate site.

The protein belongs to the EPSP synthase family. As to quaternary structure, monomer.

The protein resides in the cytoplasm. The catalysed reaction is 3-phosphoshikimate + phosphoenolpyruvate = 5-O-(1-carboxyvinyl)-3-phosphoshikimate + phosphate. It participates in metabolic intermediate biosynthesis; chorismate biosynthesis; chorismate from D-erythrose 4-phosphate and phosphoenolpyruvate: step 6/7. In terms of biological role, catalyzes the transfer of the enolpyruvyl moiety of phosphoenolpyruvate (PEP) to the 5-hydroxyl of shikimate-3-phosphate (S3P) to produce enolpyruvyl shikimate-3-phosphate and inorganic phosphate. This Yersinia pestis bv. Antiqua (strain Antiqua) protein is 3-phosphoshikimate 1-carboxyvinyltransferase.